A 265-amino-acid polypeptide reads, in one-letter code: Indole-3-glycerol phosphate synthase (265 aa).

The protein belongs to the TrpC family.

It carries out the reaction 1-(2-carboxyphenylamino)-1-deoxy-D-ribulose 5-phosphate + H(+) = (1S,2R)-1-C-(indol-3-yl)glycerol 3-phosphate + CO2 + H2O. The protein operates within amino-acid biosynthesis; L-tryptophan biosynthesis; L-tryptophan from chorismate: step 4/5. This chain is Indole-3-glycerol phosphate synthase, found in Hyphomonas neptunium (strain ATCC 15444).